Here is an 84-residue protein sequence, read N- to C-terminus: Putative defensin-like protein 38 (84 aa).

Residues 1 to 26 form the signal peptide; that stretch reads MASSKNGTVLFVSLMILLLISTGVKA. Disulfide bonds link Cys28-Cys84, Cys41-Cys65, Cys50-Cys76, and Cys54-Cys78.

This sequence belongs to the DEFL family.

Its subcellular location is the secreted. This chain is Putative defensin-like protein 38, found in Arabidopsis thaliana (Mouse-ear cress).